Consider the following 149-residue polypeptide: UPF0260 protein Avin_32930 (149 aa).

This sequence belongs to the UPF0260 family.

The sequence is that of UPF0260 protein Avin_32930 from Azotobacter vinelandii (strain DJ / ATCC BAA-1303).